A 397-amino-acid chain; its full sequence is Protein Mx1 (397 aa).

The protein belongs to the TRAFAC class dynamin-like GTPase superfamily. Dynamin/Fzo/YdjA family.

This Mus musculus (Mouse) protein is Protein Mx1 (Mx1).